The chain runs to 1756 residues: Transposon Ty1-BR Gag-Pol polyprotein (1756 aa).

3 stretches are compositionally biased toward polar residues: residues 1–10, 48–60, and 127–152; these read MESQQLSNYP, TKANSQQTTTPAS, and QSQFPQYPSSVGTPLSTPSPESGNTF. Disordered regions lie at residues 1–93, 126–173, and 352–421; these read MESQ…MMTQ, PQSQ…RPPP, and GSRN…SKST. Residues 153 to 165 show a composition bias toward low complexity; that stretch reads TDSSSADSDMTST. Residues 299 to 401 form an RNA-binding region; sequence NNGIHINNKV…NSKSKTARAH (103 aa). Residues 402-418 show a composition bias toward low complexity; the sequence is NVSTSNNSPSTDNDSIS. S416 carries the phosphoserine modification. D461 serves as the catalytic For protease activity; shared with dimeric partner. Positions 583–640 are integrase-type zinc finger-like; the sequence is NVHTSESTRKYPYPFIHRMLAHANAQTIRYSLKNNTITYFNESDVDWSSAIDYQCPDC. Residues 660-835 form the Integrase catalytic domain; it reads NSYEPFQYLH…AGLDISTLLP (176 aa). Mg(2+) contacts are provided by D671 and D736. Disordered stretches follow at residues 956–1088 and 1142–1173; these read SKAV…TEKR and PTELSDSFKELPPINSRQTNSSLGGIGDSNAY. The segment covering 960–969 has biased composition (low complexity); that stretch reads SPTDSTPPST. Polar residues-rich tracts occupy residues 1005–1017 and 1031–1043; these read STPQISDIESTDS and MSQSNTHESSYAS. Residues 1044 to 1053 show a composition bias toward basic and acidic residues; that stretch reads KSKDFRHSDS. Polar residues predominate over residues 1054–1082; the sequence is YSDNETNHTNVPISSTGGTNNKTVPQTSE. The Bipartite nuclear localization signal motif lies at 1179–1213; the sequence is KKRSLEDNETEIKVSRDTWNTKNMRSLEPPRSKKR. In terms of domain architecture, Reverse transcriptase Ty1/copia-type spans 1339-1477; sequence NNYYITQLDI…DILGLEIKYQ (139 aa). Residues D1347, D1428, D1429, D1611, E1653, and D1686 each coordinate Mg(2+). Residues 1611-1753 enclose the RNase H Ty1/copia-type domain; the sequence is DASYGNQPYY…IKTFKLLTNK (143 aa).

The capsid protein forms a homotrimer, from which the VLPs are assembled. The protease is a homodimer, whose active site consists of two apposed aspartic acid residues. In terms of processing, initially, virus-like particles (VLPs) are composed of the structural unprocessed proteins Gag and Gag-Pol, and also contain the host initiator methionine tRNA (tRNA(i)-Met) which serves as a primer for minus-strand DNA synthesis, and a dimer of genomic Ty RNA. Processing of the polyproteins occurs within the particle and proceeds by an ordered pathway, called maturation. First, the protease (PR) is released by autocatalytic cleavage of the Gag-Pol polyprotein yielding capsid protein p45 and a Pol-p154 precursor protein. This cleavage is a prerequisite for subsequent processing of Pol-p154 at the remaining sites to release the mature structural and catalytic proteins. Maturation takes place prior to the RT reaction and is required to produce transposition-competent VLPs.

Its subcellular location is the cytoplasm. The protein resides in the nucleus. The catalysed reaction is DNA(n) + a 2'-deoxyribonucleoside 5'-triphosphate = DNA(n+1) + diphosphate. The enzyme catalyses Endonucleolytic cleavage to 5'-phosphomonoester.. Capsid protein (CA) is the structural component of the virus-like particle (VLP), forming the shell that encapsulates the retrotransposons dimeric RNA genome. The particles are assembled from trimer-clustered units and there are holes in the capsid shells that allow for the diffusion of macromolecules. CA also has nucleocapsid-like chaperone activity, promoting primer tRNA(i)-Met annealing to the multipartite primer-binding site (PBS), dimerization of Ty1 RNA and initiation of reverse transcription. In terms of biological role, the aspartyl protease (PR) mediates the proteolytic cleavages of the Gag and Gag-Pol polyproteins after assembly of the VLP. Its function is as follows. Reverse transcriptase/ribonuclease H (RT) is a multifunctional enzyme that catalyzes the conversion of the retro-elements RNA genome into dsDNA within the VLP. The enzyme displays a DNA polymerase activity that can copy either DNA or RNA templates, and a ribonuclease H (RNase H) activity that cleaves the RNA strand of RNA-DNA heteroduplexes during plus-strand synthesis and hydrolyzes RNA primers. The conversion leads to a linear dsDNA copy of the retrotransposon that includes long terminal repeats (LTRs) at both ends. Functionally, integrase (IN) targets the VLP to the nucleus, where a subparticle preintegration complex (PIC) containing at least integrase and the newly synthesized dsDNA copy of the retrotransposon must transit the nuclear membrane. Once in the nucleus, integrase performs the integration of the dsDNA into the host genome. The sequence is that of Transposon Ty1-BR Gag-Pol polyprotein (TY1B-BR) from Saccharomyces cerevisiae (strain ATCC 204508 / S288c) (Baker's yeast).